Reading from the N-terminus, the 74-residue chain is MALTKEQKQEIIKQNSHFAKDTGSSEVQIAILSAEIKQLSEHLKQHPHDFHSKRGLFMKNSKRRNLVKYLANQN.

It belongs to the universal ribosomal protein uS15 family. In terms of assembly, part of the 30S ribosomal subunit. Forms a bridge to the 50S subunit in the 70S ribosome, contacting the 23S rRNA.

One of the primary rRNA binding proteins, it binds directly to 16S rRNA where it helps nucleate assembly of the platform of the 30S subunit by binding and bridging several RNA helices of the 16S rRNA. Functionally, forms an intersubunit bridge (bridge B4) with the 23S rRNA of the 50S subunit in the ribosome. The sequence is that of Small ribosomal subunit protein uS15 from Aster yellows witches'-broom phytoplasma (strain AYWB).